The chain runs to 663 residues: MKPRLIFQYFAYSFLVFLPFINTLPCSYQNPRIEDVLLEVPIEHHHPHRHRRDSENPTETPPDLQKFAPLRIQLHYDKSIQNLTAEVQHFVNTTLLPEAVGYWENALRVRPMKTPIRLRRKCISSFYYYKQGMRNVACDKGCRERTTCGEADIPNDHLLDCLACNNTDDCQTTGEMGEGVKESDFILYVTAHNSKRCEGPETLSYAAHCQQEADFDRPIAGNVNLCPSALSVHNHDYEILTSTVKHEILHALGFSVGLYAFFRDKDGKPRTKRNRYGRPTSLNKQRGYYDWDKNTITTVLREEWWTGEGKVIHPIQMMVTPKVREEARRHFGCDKLEGAELENQGGEGTVLTHWEKRAYENEAMTGTHTQNPVYSRLTLAFLEDTGWYQPNYEVAEDLHWGKQLGCDFAMKSCGEWIHQKRILGEDAYPYCSDIKHDGTKSMAITRCTSQRDSLALCNLIPFQKELPPQYRNFMSLPGVNPDGAKYYGGSVEMADYCPFLQEFEWKMPEKEHKDSRCELEGNGKEGEDILEVYGENSKCFEFPKPWTERKCGRIRVLSHYMAGCYEYQCTNGTLYVGSYNATDMYPCYAENQKVHIKKVVDGWLREGSLICPKCSDYCSSCGPPIVIPDYIGDPELDEPCFAFSKFSVFGLFSCYLAILYIRF.

A Zn(2+)-binding site is contributed by His-246. Glu-247 is a catalytic residue. His-250 and His-353 together coordinate Zn(2+).

Belongs to the peptidase M8 family. Zn(2+) serves as cofactor.

The protein resides in the cytoplasm. Its function is as follows. Metalloprotease. This is Leishmanolysin-like peptidase from Caenorhabditis briggsae.